The sequence spans 740 residues: F-BAR and double SH3 domains protein 2 (740 aa).

An F-BAR domain is found at 8 to 282 (VKVTQELKNI…NSSKVVRDYN (275 aa)). The interval 303-323 (PCDSDTSRQLESETGTTEEHS) is disordered. Positions 307–323 (DTSRQLESETGTTEEHS) are enriched in basic and acidic residues. A coiled-coil region spans residues 356 to 397 (GAAVSEQSRAELEQKIDEARENIRKAEIIKLKAEARLDLLKQ). 2 consecutive SH3 domains span residues 469-530 (NYPL…FPTS) and 567-629 (ASVC…ELSA). The tract at residues 567-629 (ASVCFVKALY…PSVLVEELSA (63 aa)) is required and sufficient for location at clathrin-coated pits. A disordered region spans residues 633 to 740 (GDTPWMREIQ…KIEDVEITLV (108 aa)). Residues 646–657 (SPKPHASLPPLP) are compositionally biased toward pro residues. Phosphoserine is present on residues Ser675 and Ser681.

In terms of assembly, homodimer. Interacts (via SH3 domain 2) with ITSN1 (via SH3 domain 4). Recruited to clathrin-coated pits during a mid-to-late stage of assembly via interaction with ITSN1. Interacts (via SH3 domain 1) with WASL. Interacts with WAS. Interacts with CASK and MAGI1. CASK inhibits interaction with MAGI1. In terms of processing, phosphorylated. Phosphorylation on a Ser residue is important for recruitment to the cell membrane and for its role in promoting endocytosis. Liver, brain, heart, placenta, skeletal muscle, pancreas, lung and kidney.

Its subcellular location is the cytoplasm. The protein localises to the cell junction. It is found in the membrane. The protein resides in the clathrin-coated pit. It localises to the cell membrane. Its subcellular location is the cell projection. The protein localises to the stereocilium. Functionally, adapter protein that plays a role in endocytosis via clathrin-coated pits. Contributes to the internalization of cell surface receptors, such as integrin ITGB1 and transferrin receptor. Promotes endocytosis of EGFR in cancer cells, and thereby contributes to the down-regulation of EGFR signaling. Recruited to clathrin-coated pits during a mid-to-late stage of assembly, where it is required for normal progress from U-shaped intermediate stage pits to terminal, omega-shaped pits. Binds to membranes enriched in phosphatidylinositol 3,4-bisphosphate or phosphatidylinositol 3,4,5-trisphosphate. When bound to membranes, promotes actin polymerization via its interaction with WAS and/or WASL which leads to the activation of the Arp2/3 complex. Does not promote actin polymerisation in the absence of membranes. The sequence is that of F-BAR and double SH3 domains protein 2 (FCHSD2) from Homo sapiens (Human).